The following is a 276-amino-acid chain: MSIFRTEEILKAAKMPPEAVHMSRLIDAVYFPILIILLVGTYHMHFMLLAGDWDFWMDWKDRQWWPVVTPIVGITYCSAIMYYLWVNYRQPFGATLCVVCLLIGEWLTRYWGFYWWSHYPINFVTPGIMLPGALMLDFTLYLTRNWLVTALVGGGFFGLLFYPGNWPIFGPTHLPIVVEGTLLSMADYMGHLYVRTGTPEYVRHIEQGSLRTFGGHTTVIAAFFSAFVSMLMFTVWWYLGKVYCTAFFYVKGKRGRIVHRNDVTAFGEEGFPEGIK.

Transmembrane regions (helical) follow at residues 29–49 (VYFP…FMLL), 66–86 (PVVT…YLWV), 96–116 (LCVV…FYWW), 123–143 (FVTP…LYLT), and 150–170 (ALVG…PIFG). Asp187, His191, and His204 together coordinate Cu(+). Residues 219-239 (VIAAFFSAFVSMLMFTVWWYL) form a helical membrane-spanning segment.

As to quaternary structure, the soluble ammonia monooxygenase is a nonamer composed of three alpha subunits (AmoA), three beta subunits (AmoB) and three gamma subunits (Cytochrome c1 PetC). Cu(+) is required as a cofactor.

It is found in the cell membrane. It localises to the cytoplasm. The enzyme catalyses AH2 + NH4(+) + O2 = hydroxylamine + A + H2O + H(+). Its activity is regulated as follows. In vitro, inhibited by acetylene. In fact, acetylene is oxidized to ketene which binds irreversibly to His-191 of ammonia monooxygenase alpha subunit (AmoA). Part of the ammonia monooxygenase complex, which catalyzes the oxidation of ammonia to hydroxylamine, the first reaction in the process of ammonia oxidation to nitrite. This chain is Ammonia monooxygenase alpha subunit, found in Nitrosomonas europaea (strain ATCC 19718 / CIP 103999 / KCTC 2705 / NBRC 14298).